Reading from the N-terminus, the 729-residue chain is Phosphoribosylformylglycinamidine synthase subunit PurL (729 aa).

The active site involves histidine 54. Residues tyrosine 57 and lysine 96 each contribute to the ATP site. Glutamate 98 contacts Mg(2+). Residues 99 to 102 (SHNH) and arginine 121 each bind substrate. Histidine 100 acts as the Proton acceptor in catalysis. Residue aspartate 122 participates in Mg(2+) binding. A substrate-binding site is contributed by glutamine 245. Aspartate 273 contributes to the Mg(2+) binding site. A substrate-binding site is contributed by 317–319 (ETQ). Aspartate 495 and glycine 532 together coordinate ATP. Position 533 (asparagine 533) interacts with Mg(2+). Serine 535 is a substrate binding site.

This sequence belongs to the FGAMS family. Monomer. Part of the FGAM synthase complex composed of 1 PurL, 1 PurQ and 2 PurS subunits.

Its subcellular location is the cytoplasm. The enzyme catalyses N(2)-formyl-N(1)-(5-phospho-beta-D-ribosyl)glycinamide + L-glutamine + ATP + H2O = 2-formamido-N(1)-(5-O-phospho-beta-D-ribosyl)acetamidine + L-glutamate + ADP + phosphate + H(+). Its pathway is purine metabolism; IMP biosynthesis via de novo pathway; 5-amino-1-(5-phospho-D-ribosyl)imidazole from N(2)-formyl-N(1)-(5-phospho-D-ribosyl)glycinamide: step 1/2. Functionally, part of the phosphoribosylformylglycinamidine synthase complex involved in the purines biosynthetic pathway. Catalyzes the ATP-dependent conversion of formylglycinamide ribonucleotide (FGAR) and glutamine to yield formylglycinamidine ribonucleotide (FGAM) and glutamate. The FGAM synthase complex is composed of three subunits. PurQ produces an ammonia molecule by converting glutamine to glutamate. PurL transfers the ammonia molecule to FGAR to form FGAM in an ATP-dependent manner. PurS interacts with PurQ and PurL and is thought to assist in the transfer of the ammonia molecule from PurQ to PurL. This is Phosphoribosylformylglycinamidine synthase subunit PurL from Staphylococcus aureus (strain bovine RF122 / ET3-1).